The following is a 135-amino-acid chain: Large ribosomal subunit protein uL22 (135 aa).

The tract at residues 112 to 135 (KKPEKKKLKAKSAKTEEAPKAAEV) is disordered. Positions 124-135 (AKTEEAPKAAEV) are enriched in basic and acidic residues.

This sequence belongs to the universal ribosomal protein uL22 family. As to quaternary structure, part of the 50S ribosomal subunit.

This protein binds specifically to 23S rRNA; its binding is stimulated by other ribosomal proteins, e.g. L4, L17, and L20. It is important during the early stages of 50S assembly. It makes multiple contacts with different domains of the 23S rRNA in the assembled 50S subunit and ribosome. Its function is as follows. The globular domain of the protein is located near the polypeptide exit tunnel on the outside of the subunit, while an extended beta-hairpin is found that lines the wall of the exit tunnel in the center of the 70S ribosome. This Brachyspira hyodysenteriae (strain ATCC 49526 / WA1) protein is Large ribosomal subunit protein uL22.